A 663-amino-acid chain; its full sequence is UvrABC system protein B (663 aa).

In terms of domain architecture, Helicase ATP-binding spans 30–417 (DGIKAGKRHQ…TDKMVEQIIR (388 aa)). 43–50 (GATGTGKT) serves as a coordination point for ATP. Positions 96–119 (YYDYYQPEAYVPSTDTFIEKDASI) match the Beta-hairpin motif. Residues 434 to 600 (QIDDLLSEIQ…TINKKIHDLI (167 aa)) enclose the Helicase C-terminal domain. Residues 627 to 662 (QKTIDNIEKEMKQAAKDLDFEKATELRDMLFELKAE) form the UVR domain.

This sequence belongs to the UvrB family. Forms a heterotetramer with UvrA during the search for lesions. Interacts with UvrC in an incision complex.

It localises to the cytoplasm. Its function is as follows. The UvrABC repair system catalyzes the recognition and processing of DNA lesions. A damage recognition complex composed of 2 UvrA and 2 UvrB subunits scans DNA for abnormalities. Upon binding of the UvrA(2)B(2) complex to a putative damaged site, the DNA wraps around one UvrB monomer. DNA wrap is dependent on ATP binding by UvrB and probably causes local melting of the DNA helix, facilitating insertion of UvrB beta-hairpin between the DNA strands. Then UvrB probes one DNA strand for the presence of a lesion. If a lesion is found the UvrA subunits dissociate and the UvrB-DNA preincision complex is formed. This complex is subsequently bound by UvrC and the second UvrB is released. If no lesion is found, the DNA wraps around the other UvrB subunit that will check the other stand for damage. This is UvrABC system protein B from Staphylococcus aureus (strain Mu50 / ATCC 700699).